The sequence spans 236 residues: Small ribosomal subunit protein uS5 (236 aa).

Positions 1 to 10 (MTENNEKDIQ) are enriched in basic and acidic residues. The interval 1 to 64 (MTENNEKDIQ…GRDGGREAEK (64 aa)) is disordered. The span at 11–27 (VTEAVAAPATETAAPAT) shows a compositional bias: low complexity. Residues 28–64 (TDDRRGGARRGERGDRGQGRGDRGGRGGRDGGREAEK) are compositionally biased toward basic and acidic residues. One can recognise an S5 DRBM domain in the interval 67–130 (FVERVVTINR…EEAKKSFFRV (64 aa)).

The protein belongs to the universal ribosomal protein uS5 family. As to quaternary structure, part of the 30S ribosomal subunit. Contacts proteins S4 and S8.

With S4 and S12 plays an important role in translational accuracy. In terms of biological role, located at the back of the 30S subunit body where it stabilizes the conformation of the head with respect to the body. This Arthrobacter sp. (strain FB24) protein is Small ribosomal subunit protein uS5.